Consider the following 3387-residue polypeptide: Genome polyprotein (3387 aa).

Residues 1–100 (MNQRKKVVRP…LNILNGRKRS (100 aa)) lie on the Cytoplasmic side of the membrane. A hydrophobic; homodimerization of capsid protein C region spans residues 36–71 (LFSGKGPLRMVLAFITFLRVLSIPPTAGILKRWGQL). Positions 100–113 (STMTLLCLIPTVMA) are cleaved as a propeptide — ER anchor for the capsid protein C, removed in mature form by serine protease NS3. A helical transmembrane segment spans residues 101-117 (TMTLLCLIPTVMAFHLS). Over 118-237 (TRDGEPLMIV…GAWKHAQRVE (120 aa)) the chain is Extracellular. Asparagine 182 carries N-linked (GlcNAc...) asparagine; by host glycosylation. The chain crosses the membrane as a helical span at residues 238–258 (SWILRNPGFALLAGFMAYMIG). At 259–265 (QTGIQRT) the chain is on the cytoplasmic side. Residues 266–279 (VFFVLMMLVAPSYG) form a helical membrane-spanning segment. Topologically, residues 280-723 (MRCVGVGNRD…AVHQVFGSVY (444 aa)) are extracellular. 4 cysteine pairs are disulfide-bonded: cysteine 282–cysteine 309, cysteine 339–cysteine 400, cysteine 353–cysteine 384, and cysteine 371–cysteine 395. N-linked (GlcNAc...) asparagine; by host glycosylation is present at asparagine 346. Residues 377–390 (DRGWGNGCGLFGKG) form a fusion peptide region. Asparagine 432 carries N-linked (GlcNAc...) asparagine; by host glycosylation. Cystine bridges form between cysteine 464/cysteine 564 and cysteine 581/cysteine 612. A helical transmembrane segment spans residues 724–744 (TTMFGGVSWMVRILIGFLVLW). Residues 745 to 750 (IGTNSR) lie on the Cytoplasmic side of the membrane. The helical transmembrane segment at 751–771 (NTSMAMTCIAVGGITLFLGFT) threads the bilayer. The Extracellular segment spans residues 772–1194 (VQADMGCVVS…MLGDTMSGRI (423 aa)). 6 cysteine pairs are disulfide-bonded: cysteine 778/cysteine 789, cysteine 829/cysteine 917, cysteine 953/cysteine 997, cysteine 1054/cysteine 1103, cysteine 1065/cysteine 1087, and cysteine 1086/cysteine 1090. Asparagine 904 and asparagine 981 each carry an N-linked (GlcNAc...) asparagine; by host glycan. Residues 1195–1218 (GGQVHLAIMAVFKMSPGYVLGVFL) traverse the membrane as a helical segment. Residues 1219-1224 (RKLTSR) are Lumenal-facing. A helical transmembrane segment spans residues 1225–1243 (ETALMVIGMAMTTVLSIPH). The Cytoplasmic segment spans residues 1244 to 1267 (DLMELIDGISLGLILLKIVTQFDN). Residues 1268 to 1288 (TQVGTLALSLTFIRSTMPLVM) traverse the membrane as a helical segment. A topological domain (lumenal) is located at residue alanine 1289. A helical membrane pass occupies residues 1290-1308 (WRTIMAVLFVVTLIPLCRT). At 1309-1316 (SCLQKQSH) the chain is on the lumenal side. The helical transmembrane segment at 1317-1337 (WVEITALILGAQALPVYLMTL) threads the bilayer. The Cytoplasmic portion of the chain corresponds to 1338-1345 (MKGASRRS). A helical membrane pass occupies residues 1346-1366 (WPLNEGIMAVGLVSLLGSALL). Topologically, residues 1367 to 1369 (KND) are lumenal. A helical membrane pass occupies residues 1370-1390 (VPLAGPMVAGGLLLAAYVMSG). Residues 1391 to 1437 (SSADLSLEKAANVQWDEMADITGSSPIIEVKQDEDGSFSIRDVEETN) lie on the Cytoplasmic side of the membrane. Residues 1397–1436 (LEKAANVQWDEMADITGSSPIIEVKQDEDGSFSIRDVEET) form an interacts with and activates NS3 protease region. The helical intramembrane region spans 1438–1458 (MITLLVKLALITVSGLYPLAI). Topologically, residues 1459-2143 (PVTMTLWYMW…QHALNELPES (685 aa)) are cytoplasmic. A Peptidase S7 domain is found at 1475 to 1652 (SGALWDVPSP…ERIGEPDYEV (178 aa)). Catalysis depends on charge relay system; for serine protease NS3 activity residues histidine 1525, aspartate 1549, and serine 1609. Positions 1654–1810 (EDIFRKKRLT…QSNSPIEDIE (157 aa)) constitute a Helicase ATP-binding domain. Residues 1658-1661 (RKKR) form an important for RNA-binding region. Residue 1667–1674 (LHPGAGKT) coordinates ATP. Residues 1758–1761 (DEAH) carry the DEAH box motif. The Helicase C-terminal domain maps to 1820-1987 (TGFDWITDYQ…IIPTLFGPER (168 aa)). Lysine 1862 is subject to N6-acetyllysine; by host. The chain crosses the membrane as a helical span at residues 2144 to 2164 (LETLMLVALLGAMTAGTFLFF). The Lumenal segment spans residues 2165 to 2169 (MQGKG). The helical intramembrane region spans 2170–2190 (IGKLSMGLITIAVASGLLWVA). Position 2191 (glutamate 2191) is a topological domain, lumenal. The chain crosses the membrane as a helical span at residues 2192 to 2212 (LQPQWIAASIILEFFLMVLLI). Residues 2213-2225 (PEPEKQRTPQDNQ) lie on the Cytoplasmic side of the membrane. The chain crosses the membrane as a helical span at residues 2226 to 2246 (LIYVILTILTIIGLIAANEMG). The Lumenal portion of the chain corresponds to 2247-2270 (LIEKTKTDFGFYQVKTETTILDVD). The segment at residues 2271 to 2291 (LRPASAWTLYAVATTILTPML) is an intramembrane region (helical). Over 2292–2301 (RHTIENTSAN) the chain is Lumenal. 2 N-linked (GlcNAc...) asparagine; by host glycosylation sites follow: asparagine 2297 and asparagine 2301. Positions 2302 to 2322 (LSLAAIANQAAVLMGLGKGWP) form an intramembrane region, helical. Topologically, residues 2323-2343 (LHRVDLGVPLLAMGCYSQVNP) are lumenal. A helical transmembrane segment spans residues 2344–2364 (TTLTASLVMLLVHYAIIGPGL). The Cytoplasmic portion of the chain corresponds to 2365–2409 (QAKATREAQKRTAAGIMKNPTVDGITVIDLEPISYDPKFEKQLGQ). A helical membrane pass occupies residues 2410–2430 (VMLLVLCAGQLLLMRTTWAFC). Residues 2431–2455 (EVLTLATGPILTLWEGNPGRFWNTT) lie on the Lumenal side of the membrane. Asparagine 2453 carries an N-linked (GlcNAc...) asparagine; by host glycan. Residues 2456–2476 (IAVSTANIFRGSYLAGAGLAF) form a helical membrane-spanning segment. Topologically, residues 2477–3387 (SLIKNAQTPR…SAPSESEGVL (911 aa)) are cytoplasmic. An mRNA cap 0-1 NS5-type MT domain is found at 2489-2751 (TGTTGETLGE…DVDLGAGTRS (263 aa)). Serine 2543 provides a ligand contact to S-adenosyl-L-methionine. The residue at position 2543 (serine 2543) is a Phosphoserine. Lysine 2548 serves as the catalytic For 2'-O-MTase activity. Residues 2564–2567 (VVDL) carry the SUMO-interacting motif motif. S-adenosyl-L-methionine contacts are provided by glycine 2573, tryptophan 2574, threonine 2591, lysine 2592, aspartate 2618, and valine 2619. Aspartate 2633 serves as the catalytic For 2'-O-MTase activity. Residue isoleucine 2634 participates in S-adenosyl-L-methionine binding. Active-site for 2'-O-MTase activity residues include lysine 2668 and glutamate 2704. S-adenosyl-L-methionine is bound at residue tyrosine 2706. Zn(2+)-binding residues include glutamate 2925, histidine 2929, cysteine 2934, and cysteine 2937. The RdRp catalytic domain occupies 3016-3166 (LMYADDTAGW…PLDERFSTSL (151 aa)). Zn(2+)-binding residues include histidine 3200, cysteine 3216, and cysteine 3335.

The protein in the N-terminal section; belongs to the class I-like SAM-binding methyltransferase superfamily. mRNA cap 0-1 NS5-type methyltransferase family. Homodimer. Interacts (via N-terminus) with host EXOC1 (via C-terminus); this interaction results in EXOC1 degradation through the proteasome degradation pathway. In terms of assembly, forms heterodimers with envelope protein E in the endoplasmic reticulum and Golgi. As to quaternary structure, homodimer; in the endoplasmic reticulum and Golgi. Interacts with protein prM. Interacts with non-structural protein 1. Homodimer; Homohexamer when secreted. Interacts with envelope protein E. In terms of assembly, interacts (via N-terminus) with serine protease NS3. As to quaternary structure, forms a heterodimer with serine protease NS3. May form homooligomers. Forms a heterodimer with NS2B. Interacts with NS4B. Interacts with unphosphorylated RNA-directed RNA polymerase NS5; this interaction stimulates RNA-directed RNA polymerase NS5 guanylyltransferase activity. Interacts with host SHFL. In terms of assembly, interacts with host MAVS; this interaction inhibits the synthesis of IFN-beta. Interacts with host SHFL. Interacts with host AUP1; the interaction occurs in the presence of Dengue virus NS4B and induces lipophagy which facilitates production of virus progeny particles. As to quaternary structure, interacts with serine protease NS3. Homodimer. Interacts with host STAT2; this interaction inhibits the phosphorylation of the latter, and, when all viral proteins are present (polyprotein), targets STAT2 for degradation. Interacts with serine protease NS3. Interacts with host PAF1 complex; the interaction may prevent the recruitment of the PAF1 complex to interferon-responsive genes, and thus reduces the immune response. Specific enzymatic cleavages in vivo yield mature proteins. Cleavages in the lumen of endoplasmic reticulum are performed by host signal peptidase, whereas cleavages in the cytoplasmic side are performed by serine protease NS3. Signal cleavage at the 2K-4B site requires a prior NS3 protease-mediated cleavage at the 4A-2K site. Post-translationally, cleaved in post-Golgi vesicles by a host furin, releasing the mature small envelope protein M, and peptide pr. This cleavage is incomplete as up to 30% of viral particles still carry uncleaved prM. In terms of processing, N-glycosylated. N-glycosylated. The excreted form is glycosylated and this is required for efficient secretion of the protein from infected cells. Post-translationally, acetylated by host KAT5. Acetylation modulates NS3 RNA-binding and unwinding activities and plays an important positive role for viral replication. In terms of processing, sumoylation of RNA-directed RNA polymerase NS5 increases NS5 protein stability allowing proper viral RNA replication. Phosphorylated on serines residues. This phosphorylation may trigger NS5 nuclear localization.

Its subcellular location is the virion. The protein resides in the host nucleus. It is found in the host cytoplasm. It localises to the host perinuclear region. The protein localises to the secreted. Its subcellular location is the virion membrane. The protein resides in the host endoplasmic reticulum membrane. It is found in the host mitochondrion. It catalyses the reaction Selective hydrolysis of -Xaa-Xaa-|-Yaa- bonds in which each of the Xaa can be either Arg or Lys and Yaa can be either Ser or Ala.. The catalysed reaction is RNA(n) + a ribonucleoside 5'-triphosphate = RNA(n+1) + diphosphate. It carries out the reaction a ribonucleoside 5'-triphosphate + H2O = a ribonucleoside 5'-diphosphate + phosphate + H(+). The enzyme catalyses ATP + H2O = ADP + phosphate + H(+). It catalyses the reaction a 5'-end (5'-triphosphoguanosine)-ribonucleoside in mRNA + S-adenosyl-L-methionine = a 5'-end (N(7)-methyl 5'-triphosphoguanosine)-ribonucleoside in mRNA + S-adenosyl-L-homocysteine. The catalysed reaction is a 5'-end (N(7)-methyl 5'-triphosphoguanosine)-ribonucleoside in mRNA + S-adenosyl-L-methionine = a 5'-end (N(7)-methyl 5'-triphosphoguanosine)-(2'-O-methyl-ribonucleoside) in mRNA + S-adenosyl-L-homocysteine + H(+). Its function is as follows. Plays a role in virus budding by binding to the cell membrane and gathering the viral RNA into a nucleocapsid that forms the core of a mature virus particle. During virus entry, may induce genome penetration into the host cytoplasm after hemifusion induced by the surface proteins. Can migrate to the cell nucleus where it modulates host functions. Overcomes the anti-viral effects of host EXOC1 by sequestering and degrading the latter through the proteasome degradation pathway. Inhibits RNA silencing by interfering with host Dicer. In terms of biological role, prevents premature fusion activity of envelope proteins in trans-Golgi by binding to envelope protein E at pH6.0. After virion release in extracellular space, gets dissociated from E dimers. Functionally, acts as a chaperone for envelope protein E during intracellular virion assembly by masking and inactivating envelope protein E fusion peptide. prM is the only viral peptide matured by host furin in the trans-Golgi network probably to avoid catastrophic activation of the viral fusion activity in acidic Golgi compartment prior to virion release. prM-E cleavage is inefficient, and many virions are only partially matured. These uncleaved prM would play a role in immune evasion. Its function is as follows. May play a role in virus budding. Exerts cytotoxic effects by activating a mitochondrial apoptotic pathway through M ectodomain. May display a viroporin activity. Binds to host cell surface receptor and mediates fusion between viral and cellular membranes. Envelope protein is synthesized in the endoplasmic reticulum in the form of heterodimer with protein prM. They play a role in virion budding in the ER, and the newly formed immature particle is covered with 60 spikes composed of heterodimer between precursor prM and envelope protein E. The virion is transported to the Golgi apparatus where the low pH causes dissociation of PrM-E heterodimers and formation of E homodimers. prM-E cleavage is inefficient, and many virions are only partially matured. These uncleaved prM would play a role in immune evasion. In terms of biological role, involved in immune evasion, pathogenesis and viral replication. Once cleaved off the polyprotein, is targeted to three destinations: the viral replication cycle, the plasma membrane and the extracellular compartment. Essential for viral replication. Required for formation of the replication complex and recruitment of other non-structural proteins to the ER-derived membrane structures. Excreted as a hexameric lipoparticle that plays a role against host immune response. Antagonizing the complement function. Binds to the host macrophages and dendritic cells. Inhibits signal transduction originating from Toll-like receptor 3 (TLR3). Functionally, disrupts the host endothelial glycocalyx layer of host pulmonary microvascular endothelial cells, inducing degradation of sialic acid and shedding of heparan sulfate proteoglycans. NS1 induces expression of sialidases, heparanase, and activates cathepsin L, which activates heparanase via enzymatic cleavage. These effects are probably linked to the endothelial hyperpermeability observed in severe dengue disease. Its function is as follows. Component of the viral RNA replication complex that functions in virion assembly and antagonizes the host immune response. Required cofactor for the serine protease function of NS3. May have membrane-destabilizing activity and form viroporins. In terms of biological role, displays three enzymatic activities: serine protease, NTPase and RNA helicase. NS3 serine protease, in association with NS2B, performs its autocleavage and cleaves the polyprotein at dibasic sites in the cytoplasm: C-prM, NS2A-NS2B, NS2B-NS3, NS3-NS4A, NS4A-2K and NS4B-NS5. NS3 RNA helicase binds RNA and unwinds dsRNA in the 3' to 5' direction. Functionally, regulates the ATPase activity of the NS3 helicase activity. NS4A allows NS3 helicase to conserve energy during unwinding. Plays a role in the inhibition of the host innate immune response. Interacts with host MAVS and thereby prevents the interaction between RIGI and MAVS. In turn, IFN-beta production is impaired. Interacts with host AUP1 which mediates induction of lipophagy in host cells and facilitates production of virus progeny particles. Its function is as follows. Functions as a signal peptide for NS4B and is required for the interferon antagonism activity of the latter. Induces the formation of ER-derived membrane vesicles where the viral replication takes place. Inhibits interferon (IFN)-induced host STAT1 phosphorylation and nuclear translocation, thereby preventing the establishment of cellular antiviral state by blocking the IFN-alpha/beta pathway. In terms of biological role, replicates the viral (+) and (-) RNA genome, and performs the capping of genomes in the cytoplasm. NS5 methylates viral RNA cap at guanine N-7 and ribose 2'-O positions. Besides its role in RNA genome replication, also prevents the establishment of cellular antiviral state by blocking the interferon-alpha/beta (IFN-alpha/beta) signaling pathway. Inhibits host TYK2 and STAT2 phosphorylation, thereby preventing activation of JAK-STAT signaling pathway. May reduce immune responses by preventing the recruitment of the host PAF1 complex to interferon-responsive genes. The sequence is that of Genome polyprotein from Dengue virus type 4 (strain Singapore/8976/1995) (DENV-4).